The primary structure comprises 62 residues: Photosystem II reaction center protein Z (62 aa).

2 consecutive transmembrane segments (helical) span residues 8–28 (AVFALIATSSILLIGVPVVFA) and 41–61 (FSGTSLWIGLVFLVGILNSLI).

This sequence belongs to the PsbZ family. As to quaternary structure, PSII is composed of 1 copy each of membrane proteins PsbA, PsbB, PsbC, PsbD, PsbE, PsbF, PsbH, PsbI, PsbJ, PsbK, PsbL, PsbM, PsbT, PsbY, PsbZ, Psb30/Ycf12, at least 3 peripheral proteins of the oxygen-evolving complex and a large number of cofactors. It forms dimeric complexes.

The protein resides in the plastid. It localises to the chloroplast thylakoid membrane. May control the interaction of photosystem II (PSII) cores with the light-harvesting antenna, regulates electron flow through the 2 photosystem reaction centers. PSII is a light-driven water plastoquinone oxidoreductase, using light energy to abstract electrons from H(2)O, generating a proton gradient subsequently used for ATP formation. The chain is Photosystem II reaction center protein Z from Panax ginseng (Korean ginseng).